The chain runs to 204 residues: LexA repressor (204 aa).

Positions 27–47 form a DNA-binding region, H-T-H motif; the sequence is VREIGEAVGLASSSTVHGHLA. Active-site for autocatalytic cleavage activity residues include S126 and K164.

This sequence belongs to the peptidase S24 family. In terms of assembly, homodimer.

It catalyses the reaction Hydrolysis of Ala-|-Gly bond in repressor LexA.. In terms of biological role, represses a number of genes involved in the response to DNA damage (SOS response), including recA and lexA. In the presence of single-stranded DNA, RecA interacts with LexA causing an autocatalytic cleavage which disrupts the DNA-binding part of LexA, leading to derepression of the SOS regulon and eventually DNA repair. The chain is LexA repressor from Listeria welshimeri serovar 6b (strain ATCC 35897 / DSM 20650 / CCUG 15529 / CIP 8149 / NCTC 11857 / SLCC 5334 / V8).